A 453-amino-acid polypeptide reads, in one-letter code: Bifunctional protein GlmU (453 aa).

The segment at 1-227 (MAVSVIILAA…SIEVMGVNDR (227 aa)) is pyrophosphorylase. UDP-N-acetyl-alpha-D-glucosamine is bound by residues 8–11 (LAAG), lysine 22, glutamine 73, 78–79 (GT), 100–102 (SGD), glycine 137, glutamate 152, asparagine 167, and asparagine 225. Aspartate 102 contributes to the Mg(2+) binding site. Asparagine 225 contributes to the Mg(2+) binding site. Residues 228–248 (QQLAYLERFYQKREAARLMGE) are linker. Positions 249 to 453 (GVSLSDPDRF…WPGWKRPSKK (205 aa)) are N-acetyltransferase. UDP-N-acetyl-alpha-D-glucosamine is bound by residues arginine 331 and lysine 349. Histidine 361 functions as the Proton acceptor in the catalytic mechanism. UDP-N-acetyl-alpha-D-glucosamine-binding residues include tyrosine 364 and asparagine 375. Acetyl-CoA-binding positions include alanine 378, 384–385 (NY), serine 403, alanine 421, and arginine 438. A disordered region spans residues 430 to 453 (PPGELTLSRTPQKSWPGWKRPSKK).

The protein in the N-terminal section; belongs to the N-acetylglucosamine-1-phosphate uridyltransferase family. This sequence in the C-terminal section; belongs to the transferase hexapeptide repeat family. As to quaternary structure, homotrimer. It depends on Mg(2+) as a cofactor.

The protein resides in the cytoplasm. It carries out the reaction alpha-D-glucosamine 1-phosphate + acetyl-CoA = N-acetyl-alpha-D-glucosamine 1-phosphate + CoA + H(+). It catalyses the reaction N-acetyl-alpha-D-glucosamine 1-phosphate + UTP + H(+) = UDP-N-acetyl-alpha-D-glucosamine + diphosphate. The protein operates within nucleotide-sugar biosynthesis; UDP-N-acetyl-alpha-D-glucosamine biosynthesis; N-acetyl-alpha-D-glucosamine 1-phosphate from alpha-D-glucosamine 6-phosphate (route II): step 2/2. It functions in the pathway nucleotide-sugar biosynthesis; UDP-N-acetyl-alpha-D-glucosamine biosynthesis; UDP-N-acetyl-alpha-D-glucosamine from N-acetyl-alpha-D-glucosamine 1-phosphate: step 1/1. Its pathway is bacterial outer membrane biogenesis; LPS lipid A biosynthesis. In terms of biological role, catalyzes the last two sequential reactions in the de novo biosynthetic pathway for UDP-N-acetylglucosamine (UDP-GlcNAc). The C-terminal domain catalyzes the transfer of acetyl group from acetyl coenzyme A to glucosamine-1-phosphate (GlcN-1-P) to produce N-acetylglucosamine-1-phosphate (GlcNAc-1-P), which is converted into UDP-GlcNAc by the transfer of uridine 5-monophosphate (from uridine 5-triphosphate), a reaction catalyzed by the N-terminal domain. The sequence is that of Bifunctional protein GlmU from Nitrosococcus oceani (strain ATCC 19707 / BCRC 17464 / JCM 30415 / NCIMB 11848 / C-107).